A 66-amino-acid chain; its full sequence is Small vasohibin-binding protein (66 aa).

A compositionally biased stretch (basic and acidic residues) spans 1–23 (MDPPARKEKPKVKEPVSRIEKAK). The disordered stretch occupies residues 1-32 (MDPPARKEKPKVKEPVSRIEKAKQKSAQQELK). A coiled-coil region spans residues 5-52 (ARKEKPKVKEPVSRIEKAKQKSAQQELKQRQRAEIYALNRVMTELEQQ).

Belongs to the SVBP family. In terms of assembly, interacts with VASH1 and VASH2.

Its subcellular location is the cytoplasm. The protein resides in the secreted. It is found in the cytoskeleton. Enhances the tyrosine carboxypeptidase activity of VASH1 and VASH2, thereby promoting the removal of the C-terminal tyrosine residue of alpha-tubulin. Also required to enhance the solubility and secretion of VASH1 and VASH2. Plays a role in axon and excitatory synapse formation. This Bos taurus (Bovine) protein is Small vasohibin-binding protein.